A 231-amino-acid polypeptide reads, in one-letter code: Probable caffeoyl-CoA O-methyltransferase 2 (231 aa).

S-adenosyl-L-methionine-binding positions include T53, D75, 77–78, S83, D101, A130, D152, D154, and Y161; that span reads GV. D152 contacts a divalent metal cation. A divalent metal cation-binding residues include D178 and N179.

The protein belongs to the class I-like SAM-binding methyltransferase superfamily. Cation-dependent O-methyltransferase family. CCoAMT subfamily.

The catalysed reaction is (E)-caffeoyl-CoA + S-adenosyl-L-methionine = (E)-feruloyl-CoA + S-adenosyl-L-homocysteine + H(+). The chain is Probable caffeoyl-CoA O-methyltransferase 2 (omt6) from Dictyostelium discoideum (Social amoeba).